A 155-amino-acid polypeptide reads, in one-letter code: Mitochondrial import protein 1 (155 aa).

Belongs to the MIM1 family.

The protein resides in the mitochondrion outer membrane. Required for the assembly of the TOM (translocase of outer membrane) receptor complex, which is responsible for the recognition and translocation of cytosolically synthesized mitochondrial preproteins. This is Mitochondrial import protein 1 from Eremothecium gossypii (strain ATCC 10895 / CBS 109.51 / FGSC 9923 / NRRL Y-1056) (Yeast).